A 243-amino-acid polypeptide reads, in one-letter code: Trypsin (243 aa).

The first 15 residues, 1-15 (MKFLLLCVLLGAAAA), serve as a signal peptide directing secretion. Positions 16–20 (FDDDK) are cleaved as a propeptide — activation peptide. The region spanning 21–241 (IIGGATCAKS…YNAWIQNTIA (221 aa)) is the Peptidase S1 domain. Cystine bridges form between cysteine 27–cysteine 157, cysteine 45–cysteine 61, cysteine 129–cysteine 230, cysteine 136–cysteine 203, cysteine 168–cysteine 182, and cysteine 193–cysteine 217. The Charge relay system role is filled by histidine 60. Glutamate 72, asparagine 74, and glutamate 82 together coordinate Ca(2+). Aspartate 104 serves as the catalytic Charge relay system. Catalysis depends on serine 197, which acts as the Charge relay system.

This sequence belongs to the peptidase S1 family. It depends on Ca(2+) as a cofactor.

It localises to the secreted. The protein localises to the extracellular space. It catalyses the reaction Preferential cleavage: Arg-|-Xaa, Lys-|-Xaa.. The polypeptide is Trypsin (Xenopus laevis (African clawed frog)).